A 550-amino-acid polypeptide reads, in one-letter code: ATP synthase subunit alpha (550 aa).

172–179 (GDRKTGKT) contacts ATP. A disordered region spans residues 521–550 (EPAAEPLAGEEDRETVTRFHDDATDRPAGS). The segment covering 534 to 550 (ETVTRFHDDATDRPAGS) has biased composition (basic and acidic residues).

The protein belongs to the ATPase alpha/beta chains family. In terms of assembly, F-type ATPases have 2 components, CF(1) - the catalytic core - and CF(0) - the membrane proton channel. CF(1) has five subunits: alpha(3), beta(3), gamma(1), delta(1), epsilon(1). CF(0) has three main subunits: a(1), b(2) and c(9-12). The alpha and beta chains form an alternating ring which encloses part of the gamma chain. CF(1) is attached to CF(0) by a central stalk formed by the gamma and epsilon chains, while a peripheral stalk is formed by the delta and b chains.

Its subcellular location is the cell membrane. The enzyme catalyses ATP + H2O + 4 H(+)(in) = ADP + phosphate + 5 H(+)(out). Its function is as follows. Produces ATP from ADP in the presence of a proton gradient across the membrane. The alpha chain is a regulatory subunit. The sequence is that of ATP synthase subunit alpha from Salinispora tropica (strain ATCC BAA-916 / DSM 44818 / JCM 13857 / NBRC 105044 / CNB-440).